A 31-amino-acid chain; its full sequence is Cytochrome b6-f complex subunit 6 (31 aa).

Residues 5-25 (ISYLGILVGALLFVTITFLTL) traverse the membrane as a helical segment.

The protein belongs to the PetL family. The 4 large subunits of the cytochrome b6-f complex are cytochrome b6, subunit IV (17 kDa polypeptide, PetD), cytochrome f and the Rieske protein, while the 4 small subunits are PetG, PetL, PetM and PetN. The complex functions as a dimer.

Its subcellular location is the plastid. It is found in the chloroplast thylakoid membrane. Functionally, component of the cytochrome b6-f complex, which mediates electron transfer between photosystem II (PSII) and photosystem I (PSI), cyclic electron flow around PSI, and state transitions. PetL is important for photoautotrophic growth as well as for electron transfer efficiency and stability of the cytochrome b6-f complex. The polypeptide is Cytochrome b6-f complex subunit 6 (Chlorokybus atmophyticus (Soil alga)).